The sequence spans 602 residues: Adenylosuccinate synthetase (602 aa).

GTP contacts are provided by residues 74 to 80 (GDEGKGK) and 104 to 106 (GHT). The Proton acceptor role is filled by aspartate 75. Residues aspartate 75 and glycine 104 each contribute to the Mg(2+) site. Residues 75–78 (DEGK), 102–105 (NAGH), threonine 189, lysine 203, glutamine 315, threonine 331, and lysine 459 contribute to the IMP site. Histidine 105 (proton donor) is an active-site residue. 455 to 461 (AVTKKPR) contacts substrate. Residues arginine 461 and 589–591 (GNG) contribute to the GTP site.

It belongs to the adenylosuccinate synthetase family. In terms of assembly, homodimer. The cofactor is Mg(2+).

It localises to the cytoplasm. It catalyses the reaction IMP + L-aspartate + GTP = N(6)-(1,2-dicarboxyethyl)-AMP + GDP + phosphate + 2 H(+). Its pathway is purine metabolism; AMP biosynthesis via de novo pathway; AMP from IMP: step 1/2. Its function is as follows. Plays an important role in the salvage pathway for purine nucleotide biosynthesis. Catalyzes the first committed step in the biosynthesis of AMP from IMP. In Trypanosoma brucei gambiense (strain MHOM/CI/86/DAL972), this protein is Adenylosuccinate synthetase.